A 160-amino-acid chain; its full sequence is uncharacterized protein (160 aa).

A signal peptide spans Met-1–Ala-29. 2 helical membrane-spanning segments follow: residues Thr-67 to Pro-87 and Gln-137 to Gly-157.

This sequence to E.coli YdjM.

Its subcellular location is the cell membrane. This is an uncharacterized protein from Bacillus subtilis (strain 168).